We begin with the raw amino-acid sequence, 418 residues long: Glutamyl-tRNA(Gln) amidotransferase subunit D (418 aa).

One can recognise an Asparaginase/glutaminase domain in the interval 74–405; that stretch reads KNISILSTGG…EEAKELMPKN (332 aa). Catalysis depends on residues Thr84, Thr160, Asp161, and Lys237.

The protein belongs to the asparaginase 1 family. GatD subfamily. As to quaternary structure, heterodimer of GatD and GatE.

The catalysed reaction is L-glutamyl-tRNA(Gln) + L-glutamine + ATP + H2O = L-glutaminyl-tRNA(Gln) + L-glutamate + ADP + phosphate + H(+). Allows the formation of correctly charged Gln-tRNA(Gln) through the transamidation of misacylated Glu-tRNA(Gln) in organisms which lack glutaminyl-tRNA synthetase. The reaction takes place in the presence of glutamine and ATP through an activated gamma-phospho-Glu-tRNA(Gln). The GatDE system is specific for glutamate and does not act on aspartate. This is Glutamyl-tRNA(Gln) amidotransferase subunit D from Methanococcus maripaludis (strain C6 / ATCC BAA-1332).